The chain runs to 144 residues: Large ribosomal subunit protein uL15 (144 aa).

A disordered region spans residues 1–60 (MKMNTLKPAEGSKQSPKRLGRGIGSGLGKTGGRGHKGQTSRSGGTIRPGFEGGQQPLQRR). The segment covering 21-31 (RGIGSGLGKTG) has biased composition (gly residues).

The protein belongs to the universal ribosomal protein uL15 family. As to quaternary structure, part of the 50S ribosomal subunit.

Binds to the 23S rRNA. The sequence is that of Large ribosomal subunit protein uL15 from Hahella chejuensis (strain KCTC 2396).